The chain runs to 932 residues: Leucine--tRNA ligase (932 aa).

Residues 38–48 carry the 'HIGH' region motif; that stretch reads PYLNGNLHAGH. The short motif at 630–634 is the 'KMSKS' region element; sequence KMSKS. Residue Lys-633 coordinates ATP.

It belongs to the class-I aminoacyl-tRNA synthetase family.

The protein localises to the cytoplasm. The enzyme catalyses tRNA(Leu) + L-leucine + ATP = L-leucyl-tRNA(Leu) + AMP + diphosphate. This Archaeoglobus fulgidus (strain ATCC 49558 / DSM 4304 / JCM 9628 / NBRC 100126 / VC-16) protein is Leucine--tRNA ligase.